The sequence spans 559 residues: Urocanate hydratase (559 aa).

NAD(+) contacts are provided by residues 54 to 55, Q132, 178 to 180, E198, R203, 244 to 245, 265 to 269, 275 to 276, and Y324; these read GG, GMG, NA, QTSAH, and YL. Residue C412 is part of the active site. Residue G494 participates in NAD(+) binding.

Belongs to the urocanase family. It depends on NAD(+) as a cofactor.

It is found in the cytoplasm. The enzyme catalyses 4-imidazolone-5-propanoate = trans-urocanate + H2O. It participates in amino-acid degradation; L-histidine degradation into L-glutamate; N-formimidoyl-L-glutamate from L-histidine: step 2/3. In terms of biological role, catalyzes the conversion of urocanate to 4-imidazolone-5-propionate. This is Urocanate hydratase from Photorhabdus laumondii subsp. laumondii (strain DSM 15139 / CIP 105565 / TT01) (Photorhabdus luminescens subsp. laumondii).